Here is a 121-residue protein sequence, read N- to C-terminus: Homeobox protein HD-6 (121 aa).

The homeobox DNA-binding region spans 28–87; that stretch reads PKRSRIQLHDWQSMLLEHSFRMNPYPDRIEKYNLFLKTKIPMKNVKIWFQNRRAREKSFY.

It is found in the nucleus. The polypeptide is Homeobox protein HD-6 (HD-6) (Encephalitozoon cuniculi (strain GB-M1) (Microsporidian parasite)).